A 200-amino-acid polypeptide reads, in one-letter code: Nucleoside triphosphate pyrophosphatase (200 aa).

Asp79 functions as the Proton acceptor in the catalytic mechanism.

Belongs to the Maf family. Requires a divalent metal cation as cofactor.

It localises to the cytoplasm. The enzyme catalyses a ribonucleoside 5'-triphosphate + H2O = a ribonucleoside 5'-phosphate + diphosphate + H(+). It catalyses the reaction a 2'-deoxyribonucleoside 5'-triphosphate + H2O = a 2'-deoxyribonucleoside 5'-phosphate + diphosphate + H(+). Nucleoside triphosphate pyrophosphatase. May have a dual role in cell division arrest and in preventing the incorporation of modified nucleotides into cellular nucleic acids. The polypeptide is Nucleoside triphosphate pyrophosphatase (Legionella pneumophila subsp. pneumophila (strain Philadelphia 1 / ATCC 33152 / DSM 7513)).